Reading from the N-terminus, the 75-residue chain is ATP synthase subunit epsilon, mitochondrial (75 aa).

Residues 1–9 constitute a mitochondrion transit peptide; sequence MIRRSCALL.

It belongs to the eukaryotic ATPase epsilon family. F-type ATPases have 2 components, F(1) - the catalytic core - and F(o) - the membrane proton channel. F(1) has five subunits: alpha(3), beta(3), gamma(1), delta(1), epsilon(1), plus the additional subunit P18 (Tb427.05.1710) that is not present in F(1)F(o) ATP synthase from metazoa. Subunit P18 (Tb927.5.1710) interacts with the alpha subunit with a 1:1 stoichiometry; the interaction is direct. Subunit gamma is part of the central stalk. F(o) has three main subunits: a, b and c. The trypanosomal ATPase complex contains additional subunits that are not present in the F(1)F(o) ATP synthase from metazoa.

It is found in the mitochondrion. The protein localises to the mitochondrion inner membrane. In terms of biological role, mitochondrial membrane ATP synthase (F(1)F(o) ATP synthase) produces ATP from ADP in the presence of a proton gradient across the membrane which is generated by electron transport complexes of the respiratory chain. F-type ATPases consist of two structural domains, F(1) - containing the extramembraneous catalytic core, and F(o) - containing the membrane proton channel, linked together by a central stalk and a peripheral stalk. During catalysis, ATP synthesis in the catalytic domain of F(1) is coupled via a rotary mechanism of the central stalk subunits to proton translocation. Subunits alpha and beta form the catalytic core in F(1). Rotation of the central stalk against the surrounding alpha(3)beta(3) subunits leads to hydrolysis of ATP in three separate catalytic sites on the beta subunits. Contrary to the procyclic, insect form that requires F(1)F(o) ATP synthase for ATP synthesis, the bloodstream form relies on ATP hydrolysis by F(1)F(o) ATP synthase to maintain its mitochondrial membrane potential. This is ATP synthase subunit epsilon, mitochondrial from Trypanosoma brucei brucei.